The following is a 452-amino-acid chain: MPEAIVYLTETEICQKCKTENAVVHARVEKLCSNCYIRFIRGKLRKQMHDERYKVKFGRAVEQYGTQRILLALSGGESSLVLLDIFGSLLQEQNELHKGKQGFELVVVNLDEYELDSLNNRIQKVFPELLAKYQPVKISLNVLSLDSYVDEESLHRILLTPDFRAMSKSIDPTRVTLTEILRLCPNKSSAEDLLTIVYNDLILRVAAKEDCQTVVYGHCMTRLANEIIALTVKGRGSIIHKSIADHTETIDDKEIKVMFPLREILQAEISAYVKLAELNKYVISSTVQKSKINKNLTIRDLTTNYFKQLDATGYASTASTVAKTGEKLGSPSNVLCQCQICGADIHQNPSNWLKRITVTDPAAITTDEEKEYYEMFRASLSPDNEDKNNSDSPIDICFGCTVTLGGVKGDTGFIWPLQGSSELKYEYRNDNQEKQKVLDEFVLTDDEGDIEV.

Belongs to the CTU2/NCS2 family.

The protein localises to the cytoplasm. Its pathway is tRNA modification; 5-methoxycarbonylmethyl-2-thiouridine-tRNA biosynthesis. Plays a central role in 2-thiolation of mcm(5)S(2)U at tRNA wobble positions of tRNA(Lys), tRNA(Glu) and tRNA(Gln). May act by forming a heterodimer with NCS6 that ligates sulfur from thiocarboxylated URM1 onto the uridine of tRNAs at wobble position. Prior mcm(5) tRNA modification by the elongator complex is required for 2-thiolation. May also be involved in protein urmylation. The chain is Cytoplasmic tRNA 2-thiolation protein 2 from Candida albicans (strain SC5314 / ATCC MYA-2876) (Yeast).